The following is a 524-amino-acid chain: DEAD-box ATP-dependent RNA helicase CshA (524 aa).

The Q motif signature appears at 1–29 (MKFNELNLSADLLAEIEKAGFVEASPIQE). One can recognise a Helicase ATP-binding domain in the interval 32 to 202 (IPLALEGKDV…VQFMKAPEHV (171 aa)). 45 to 52 (AQTGTGKT) is an ATP binding site. Residues 150 to 153 (DEAD) carry the DEAD box motif. The Helicase C-terminal domain occupies 213 to 373 (LVDQYYIRVK…GLKPASVEES (161 aa)). Residues 440–524 (EKPLPFKPSG…GFVIRNKGDK (85 aa)) are disordered. Over residues 463–498 (RRGDDRRERDRRGNGRRDEFKKGSRGNDRFDKEKRY) the composition is skewed to basic and acidic residues.

This sequence belongs to the DEAD box helicase family. CshA subfamily. As to quaternary structure, oligomerizes, may be a member of the RNA degradosome.

It is found in the cytoplasm. The enzyme catalyses ATP + H2O = ADP + phosphate + H(+). Its function is as follows. DEAD-box RNA helicase possibly involved in RNA degradation. Unwinds dsRNA in both 5'- and 3'-directions, has RNA-dependent ATPase activity. This chain is DEAD-box ATP-dependent RNA helicase CshA, found in Streptococcus pneumoniae serotype 4 (strain ATCC BAA-334 / TIGR4).